The sequence spans 33 residues: Photosystem II reaction center protein Psb30 (33 aa).

A helical membrane pass occupies residues 5–25; sequence IVFQLTALLFVVAAGPLVIVL.

This sequence belongs to the Psb30/Ycf12 family. In terms of assembly, PSII is composed of 1 copy each of membrane proteins PsbA, PsbB, PsbC, PsbD, PsbE, PsbF, PsbH, PsbI, PsbJ, PsbK, PsbL, PsbM, PsbT, PsbX, PsbY, PsbZ, Psb30/Ycf12, peripheral proteins of the oxygen-evolving complex and a large number of cofactors. It forms dimeric complexes.

It is found in the plastid. Its subcellular location is the chloroplast thylakoid membrane. Its function is as follows. A core subunit of photosystem II (PSII), probably helps stabilize the reaction center. In Chlorella vulgaris (Green alga), this protein is Photosystem II reaction center protein Psb30.